The following is a 78-amino-acid chain: Translational regulator CsrA (78 aa).

Belongs to the CsrA/RsmA family. As to quaternary structure, homodimer; the beta-strands of each monomer intercalate to form a hydrophobic core, while the alpha-helices form wings that extend away from the core.

The protein localises to the cytoplasm. A translational regulator that binds mRNA to regulate translation initiation and/or mRNA stability. Usually binds in the 5'-UTR at or near the Shine-Dalgarno sequence preventing ribosome-binding, thus repressing translation. Its main target seems to be the major flagellin gene, while its function is anatagonized by FliW. This is Translational regulator CsrA from Oleidesulfovibrio alaskensis (strain ATCC BAA-1058 / DSM 17464 / G20) (Desulfovibrio alaskensis).